Here is a 174-residue protein sequence, read N- to C-terminus: MKTFVLGGGCFWCLDAVYQKTRGVSSVVSGYTGGHVRNPDYYEVCSGTTGHAEVVAVTFDETVVPEEVILDMFFALHDPTTLNRQGYDVGTQYRSSMFYTTTEEKVLFEEAIERAQALWSDPIVTEVSRLPEFHEAEEVHQNYYAKFPYQGYCQVIINPKLAKARKYYSAWLTA.

The active site involves cysteine 10.

It belongs to the MsrA Met sulfoxide reductase family.

The enzyme catalyses L-methionyl-[protein] + [thioredoxin]-disulfide + H2O = L-methionyl-(S)-S-oxide-[protein] + [thioredoxin]-dithiol. It carries out the reaction [thioredoxin]-disulfide + L-methionine + H2O = L-methionine (S)-S-oxide + [thioredoxin]-dithiol. Functionally, has an important function as a repair enzyme for proteins that have been inactivated by oxidation. Catalyzes the reversible oxidation-reduction of methionine sulfoxide in proteins to methionine. The sequence is that of Peptide methionine sulfoxide reductase MsrA from Paenarthrobacter aurescens (strain TC1).